The following is a 126-amino-acid chain: S-adenosylmethionine decarboxylase proenzyme (126 aa).

Ser63 serves as the catalytic Schiff-base intermediate with substrate; via pyruvic acid. The residue at position 63 (Ser63) is a Pyruvic acid (Ser); by autocatalysis. The Proton acceptor; for processing activity role is filled by His68. Residue Cys83 is the Proton donor; for catalytic activity of the active site.

Belongs to the prokaryotic AdoMetDC family. Type 1 subfamily. In terms of assembly, heterotetramer of two alpha and two beta chains arranged as a dimer of alpha/beta heterodimers. Pyruvate is required as a cofactor. Post-translationally, is synthesized initially as an inactive proenzyme. Formation of the active enzyme involves a self-maturation process in which the active site pyruvoyl group is generated from an internal serine residue via an autocatalytic post-translational modification. Two non-identical subunits are generated from the proenzyme in this reaction, and the pyruvate is formed at the N-terminus of the alpha chain, which is derived from the carboxyl end of the proenzyme. The post-translation cleavage follows an unusual pathway, termed non-hydrolytic serinolysis, in which the side chain hydroxyl group of the serine supplies its oxygen atom to form the C-terminus of the beta chain, while the remainder of the serine residue undergoes an oxidative deamination to produce ammonia and the pyruvoyl group blocking the N-terminus of the alpha chain.

The catalysed reaction is S-adenosyl-L-methionine + H(+) = S-adenosyl 3-(methylsulfanyl)propylamine + CO2. It participates in amine and polyamine biosynthesis; S-adenosylmethioninamine biosynthesis; S-adenosylmethioninamine from S-adenosyl-L-methionine: step 1/1. Functionally, catalyzes the decarboxylation of S-adenosylmethionine to S-adenosylmethioninamine (dcAdoMet), the propylamine donor required for the synthesis of the polyamines spermine and spermidine from the diamine putrescine. The chain is S-adenosylmethionine decarboxylase proenzyme from Oceanobacillus iheyensis (strain DSM 14371 / CIP 107618 / JCM 11309 / KCTC 3954 / HTE831).